The sequence spans 192 residues: A-type ATP synthase subunit E (192 aa).

Residues 1-66 (MSLDTVVEDI…QERDQKLSSA (66 aa)) are disordered. A compositionally biased stretch (basic and acidic residues) spans 8-26 (EDIRDEARARADEIRSEGE). A compositionally biased stretch (acidic residues) spans 27 to 49 (ERAEEIIDEAEREADDIVDEAER). A compositionally biased stretch (basic and acidic residues) spans 50–66 (EAERKISQERDQKLSSA).

The protein belongs to the V-ATPase E subunit family. In terms of assembly, has multiple subunits with at least A(3), B(3), C, D, E, F, H, I and proteolipid K(x).

The protein resides in the cell membrane. In terms of biological role, component of the A-type ATP synthase that produces ATP from ADP in the presence of a proton gradient across the membrane. The sequence is that of A-type ATP synthase subunit E from Natronomonas pharaonis (strain ATCC 35678 / DSM 2160 / CIP 103997 / JCM 8858 / NBRC 14720 / NCIMB 2260 / Gabara) (Halobacterium pharaonis).